Consider the following 482-residue polypeptide: MNMATFLRGFEEKGLKNDRPGDQFSKEKKKILFSFCEVCNIQLNSAAQAQVHYDGKSHRKRVKQLSDGQPPPPVQGSVPLLAGPCPCPGPGPNTSTGSACHTTTLPALVRTPTLMMQPSLDIKPFMSFPVDSSSAVGLFPNFNTMDPVQKAVINHTFGVSIPPKKKQVISCNVCQLRFNSDSQAEAHYKGSKHAKKVKALEATKNKPKMVPSKDSAKANPSCSIRPGTGDSSDKSEDKGKIKATSSSQPSGSEGGSFLLKSGTTPLPLGAIASPSKSTNGAPGSVAESEEEKAKKLLYCSLCKVAVNSLSQLEAHNTGSKHKTMVEARNGAGPIKSYPRPGSRLKVQNGSKGSGLQNKMFHCEICDVHVNSEIQLKQHISSRRHKDRVAGKPLKPKYSPYNKLQRSPSILAAKLAFQKDLMKPLAPTFLSSPLAAAAVSSALSLPPRPSASLFQAAAIPPALLRPGHGPIRATPASILFAPY.

Residues 1–105 (MNMATFLRGF…TGSACHTTTL (105 aa)) are required for induction of apoptosis. Matrin-type zinc fingers lie at residues 34 to 64 (SFCE…RVKQ) and 169 to 199 (ISCN…KVKA). Disordered stretches follow at residues 54-75 (DGKS…PPVQ), 189-259 (KGSK…SFLL), and 268-287 (LGAI…SVAE). The interaction with p53/TP53 stretch occupies residues 106 to 482 (PALVRTPTLM…TPASILFAPY (377 aa)). The segment covering 231–240 (SSDKSEDKGK) has biased composition (basic and acidic residues). Residues 294–328 (KKLLYCSLCKVAVNSLSQLEAHNTGSKHKTMVEAR) form a Matrin-type 3 zinc finger. 2 disordered regions span residues 331-352 (AGPI…GSKG) and 378-397 (HISS…KPKY). The Matrin-type 4 zinc-finger motif lies at 360–390 (FHCEICDVHVNSEIQLKQHISSRRHKDRVAG).

As to quaternary structure, interacts with p53/TP53; the interaction is direct.

The protein localises to the nucleus. Its function is as follows. May play a role in p53/TP53-mediated apoptosis. The sequence is that of Zinc finger protein 385B (Znf385b) from Mus musculus (Mouse).